The primary structure comprises 720 residues: MTEPEITPELIAAHGLKPDEYQRILEIIGRAPTFTELGIFSAMWNEHCSYKSSKKWLRTLPTTGPQVICGPGENAGVVDIGDGQAVIFKMESHNHPSYIEPYQGAATGVGGILRDVFTMGARPIAAMNALSFGEPSHPKTAHIVKGVVEGIGGYGNAFGVPTVGGEVRFHRAYNGNCLVNAFAAGLADADRIFYSAASGVGMPVVYLGAKTGRDGVGGATMASAEFDDTIEEKRPTVQVGDPFTEKRLLEACLELMASDSVISIQDMGAAGLTCSAVEMGDKGDLGIRLQLDAVPQREANMTAYEMMLSESQERMLMVLKPEKEAVARAIFEKWDLDFAIVGETIPEDRFLILHGNEVKADLPLKALSGTAPEYDRPWIETPAAAPLGAVPEVDPIEGLKALIGSPSYAHKAWVWEQYDSQVMADTVRAPGLGAGVVRVHGTPKALAFTSDVTPRYVKANPFEGGKQAVAEAYRNLTAVGARPLATTDNMNFGNPEKPEIMGQFVGAIEGIGAAVAALDMPIVSGNVSLYNETDGVGILPTPTIGAVGLLTSLDELIAGEPQAGDLALVIGTTAGHLGQSALLAEMFGREEGDAPPVDLEAEKRHGEFLRANRKLVRAAADLSDGGLALAAFEMAEAAGLGLTLTPSGTAALFGEDQARYLVACAPDRAEALQAAAEAAGVPLQEVGRFGGAAVTLAGASAPLADLSRLYRRAFAEAIGG.

The active site involves H47. Residues Y50 and K89 each contribute to the ATP site. E91 provides a ligand contact to Mg(2+). Residues 92 to 95 (SHNH) and R114 each bind substrate. H93 functions as the Proton acceptor in the catalytic mechanism. D115 is a binding site for Mg(2+). Q238 contacts substrate. Residue D266 participates in Mg(2+) binding. Position 310-312 (310-312 (ESQ)) interacts with substrate. D488 and G525 together coordinate ATP. N526 lines the Mg(2+) pocket. S528 serves as a coordination point for substrate.

It belongs to the FGAMS family. In terms of assembly, monomer. Part of the FGAM synthase complex composed of 1 PurL, 1 PurQ and 2 PurS subunits.

It localises to the cytoplasm. It carries out the reaction N(2)-formyl-N(1)-(5-phospho-beta-D-ribosyl)glycinamide + L-glutamine + ATP + H2O = 2-formamido-N(1)-(5-O-phospho-beta-D-ribosyl)acetamidine + L-glutamate + ADP + phosphate + H(+). Its pathway is purine metabolism; IMP biosynthesis via de novo pathway; 5-amino-1-(5-phospho-D-ribosyl)imidazole from N(2)-formyl-N(1)-(5-phospho-D-ribosyl)glycinamide: step 1/2. Its function is as follows. Part of the phosphoribosylformylglycinamidine synthase complex involved in the purines biosynthetic pathway. Catalyzes the ATP-dependent conversion of formylglycinamide ribonucleotide (FGAR) and glutamine to yield formylglycinamidine ribonucleotide (FGAM) and glutamate. The FGAM synthase complex is composed of three subunits. PurQ produces an ammonia molecule by converting glutamine to glutamate. PurL transfers the ammonia molecule to FGAR to form FGAM in an ATP-dependent manner. PurS interacts with PurQ and PurL and is thought to assist in the transfer of the ammonia molecule from PurQ to PurL. The sequence is that of Phosphoribosylformylglycinamidine synthase subunit PurL from Cereibacter sphaeroides (strain KD131 / KCTC 12085) (Rhodobacter sphaeroides).